The sequence spans 349 residues: Histidinol-phosphate aminotransferase 1 (349 aa).

K213 is modified (N6-(pyridoxal phosphate)lysine).

The protein belongs to the class-II pyridoxal-phosphate-dependent aminotransferase family. Histidinol-phosphate aminotransferase subfamily. As to quaternary structure, homodimer. Pyridoxal 5'-phosphate is required as a cofactor.

The enzyme catalyses L-histidinol phosphate + 2-oxoglutarate = 3-(imidazol-4-yl)-2-oxopropyl phosphate + L-glutamate. Its pathway is amino-acid biosynthesis; L-histidine biosynthesis; L-histidine from 5-phospho-alpha-D-ribose 1-diphosphate: step 7/9. The polypeptide is Histidinol-phosphate aminotransferase 1 (Carboxydothermus hydrogenoformans (strain ATCC BAA-161 / DSM 6008 / Z-2901)).